The following is a 449-amino-acid chain: Tubulin beta chain (449 aa).

Residues Q11, E69, S138, G142, T143, G144, N204, and N226 each contribute to the GTP site. A Mg(2+)-binding site is contributed by E69. A disordered region spans residues 426 to 449 (QDATAEEEGEFDEEEGEMGAEEGA). Residues 429–449 (TAEEEGEFDEEEGEMGAEEGA) show a composition bias toward acidic residues.

This sequence belongs to the tubulin family. Dimer of alpha and beta chains. A typical microtubule is a hollow water-filled tube with an outer diameter of 25 nm and an inner diameter of 15 nM. Alpha-beta heterodimers associate head-to-tail to form protofilaments running lengthwise along the microtubule wall with the beta-tubulin subunit facing the microtubule plus end conferring a structural polarity. Microtubules usually have 13 protofilaments but different protofilament numbers can be found in some organisms and specialized cells. It depends on Mg(2+) as a cofactor.

The protein localises to the cytoplasm. It is found in the cytoskeleton. In terms of biological role, tubulin is the major constituent of microtubules, a cylinder consisting of laterally associated linear protofilaments composed of alpha- and beta-tubulin heterodimers. Microtubules grow by the addition of GTP-tubulin dimers to the microtubule end, where a stabilizing cap forms. Below the cap, tubulin dimers are in GDP-bound state, owing to GTPase activity of alpha-tubulin. This chain is Tubulin beta chain, found in Toxoplasma gondii.